The chain runs to 1334 residues: Aldehyde oxidase 3 (1334 aa).

The 88-residue stretch at 8-95 (DELIFFVNGK…GAAVTTVEGI (88 aa)) folds into the 2Fe-2S ferredoxin-type domain. [2Fe-2S] cluster is bound by residues cysteine 47, cysteine 52, cysteine 55, and cysteine 77. Glutamine 116 is a Mo-molybdopterin binding site. Cysteine 117, cysteine 120, cysteine 152, and cysteine 154 together coordinate [2Fe-2S] cluster. Residues 236 to 421 (FRGERTTWIA…ISVFVPLSRK (186 aa)) form the FAD-binding PCMH-type domain. Residue 264 to 271 (LVIGNTCL) coordinates FAD. Serine 320 carries the post-translational modification Phosphoserine. FAD is bound by residues serine 354, histidine 358, aspartate 367, and leucine 411. Mo-molybdopterin contacts are provided by glycine 801, leucine 1042, and glutamine 1198. Catalysis depends on glutamate 1265, which acts as the Proton acceptor; for azaheterocycle hydroxylase activity.

It belongs to the xanthine dehydrogenase family. As to quaternary structure, homodimer. Requires [2Fe-2S] cluster as cofactor. The cofactor is FAD. Mo-molybdopterin serves as cofactor.

Its subcellular location is the cytoplasm. It carries out the reaction an aldehyde + O2 + H2O = a carboxylate + H2O2 + H(+). In terms of biological role, oxidase with broad substrate specificity, oxidizing aromatic azaheterocycles, such as N1-methylnicotinamide and phthalazine, as well as aldehydes, such as benzaldehyde, retinal and pyridoxal. Plays a key role in the metabolism of xenobiotics and drugs containing aromatic azaheterocyclic substituents. Is probably involved in the regulation of reactive oxygen species homeostasis. Is a prominent source of superoxide generation via the one-electron reduction of molecular oxygen. Also catalyzes nitric oxide (NO) production; under anaerobic conditions, reduces nitrite to NO with NADH or aldehyde as electron donor, but under aerobic conditions, NADH is the preferred substrate. These reactions may be catalyzed by several isozymes. This chain is Aldehyde oxidase 3 (Aox3), found in Rattus norvegicus (Rat).